The following is a 136-amino-acid chain: Large ribosomal subunit protein uL16 (136 aa).

It belongs to the universal ribosomal protein uL16 family. Part of the 50S ribosomal subunit.

Functionally, binds 23S rRNA and is also seen to make contacts with the A and possibly P site tRNAs. This Vibrio atlanticus (strain LGP32) (Vibrio splendidus (strain Mel32)) protein is Large ribosomal subunit protein uL16.